The sequence spans 222 residues: Eukaryotic translation initiation factor 3 subunit K (222 aa).

The region spanning 46–208 is the PCI domain; it reads YDLEANLAVL…KIKTKNITEK (163 aa).

The protein belongs to the eIF-3 subunit K family. Component of the eukaryotic translation initiation factor 3 (eIF-3) complex. The eIF-3 complex interacts with pix.

Its subcellular location is the cytoplasm. Functionally, component of the eukaryotic translation initiation factor 3 (eIF-3) complex, which is involved in protein synthesis of a specialized repertoire of mRNAs and, together with other initiation factors, stimulates binding of mRNA and methionyl-tRNAi to the 40S ribosome. The eIF-3 complex specifically targets and initiates translation of a subset of mRNAs involved in cell proliferation. This chain is Eukaryotic translation initiation factor 3 subunit K, found in Drosophila erecta (Fruit fly).